The primary structure comprises 471 residues: ATP synthase subunit beta (471 aa).

ATP is bound at residue 153 to 160 (GGAGVGKT).

It belongs to the ATPase alpha/beta chains family. As to quaternary structure, F-type ATPases have 2 components, CF(1) - the catalytic core - and CF(0) - the membrane proton channel. CF(1) has five subunits: alpha(3), beta(3), gamma(1), delta(1), epsilon(1). CF(0) has four main subunits: a(1), b(1), b'(1) and c(9-12).

The protein resides in the cell membrane. The catalysed reaction is ATP + H2O + 4 H(+)(in) = ADP + phosphate + 5 H(+)(out). Functionally, produces ATP from ADP in the presence of a proton gradient across the membrane. The catalytic sites are hosted primarily by the beta subunits. The chain is ATP synthase subunit beta from Roseiflexus sp. (strain RS-1).